A 351-amino-acid polypeptide reads, in one-letter code: Regulator of V-ATPase in vacuolar membrane protein 2 (351 aa).

Component of the RAVE complex composed of RAV1, RAV2 and CBF3D/SKP1. Within the complex, it interacts directly with RAV1 and CBF3D. Interacts with the V-ATPase V1 subunits VMA1, VMA2 and VMA8.

It localises to the cytoplasm. It is found in the early endosome membrane. Component of the RAVE complex, which is required for stable assembly of the vacuolar ATPase complex V-ATPase under many conditions. May be required for transport between the early endosome and the late endosome/prevacuolar compartment (PVC). In Saccharomyces cerevisiae (strain ATCC 204508 / S288c) (Baker's yeast), this protein is Regulator of V-ATPase in vacuolar membrane protein 2 (RAV2).